A 156-amino-acid polypeptide reads, in one-letter code: Peptide methionine sulfoxide reductase MsrA (156 aa).

Cys-10 is an active-site residue.

It belongs to the MsrA Met sulfoxide reductase family.

It catalyses the reaction L-methionyl-[protein] + [thioredoxin]-disulfide + H2O = L-methionyl-(S)-S-oxide-[protein] + [thioredoxin]-dithiol. The catalysed reaction is [thioredoxin]-disulfide + L-methionine + H2O = L-methionine (S)-S-oxide + [thioredoxin]-dithiol. Has an important function as a repair enzyme for proteins that have been inactivated by oxidation. Catalyzes the reversible oxidation-reduction of methionine sulfoxide in proteins to methionine. The protein is Peptide methionine sulfoxide reductase MsrA of Acidobacterium capsulatum (strain ATCC 51196 / DSM 11244 / BCRC 80197 / JCM 7670 / NBRC 15755 / NCIMB 13165 / 161).